Consider the following 129-residue polypeptide: Small ribosomal subunit protein uS11 (129 aa).

Belongs to the universal ribosomal protein uS11 family. In terms of assembly, part of the 30S ribosomal subunit. Interacts with proteins S7 and S18. Binds to IF-3.

Located on the platform of the 30S subunit, it bridges several disparate RNA helices of the 16S rRNA. Forms part of the Shine-Dalgarno cleft in the 70S ribosome. The sequence is that of Small ribosomal subunit protein uS11 from Enterococcus faecalis (strain ATCC 700802 / V583).